Consider the following 300-residue polypeptide: 3-hydroxy-3-isohexenylglutaryl-CoA/hydroxy-methylglutaryl-CoA lyase (300 aa).

Residues 7-274 enclose the Pyruvate carboxyltransferase domain; sequence VRLVEVGPRD…HTGVDMHALV (268 aa). Residue R15 participates in substrate binding. D16, H207, and H209 together coordinate a divalent metal cation. C240 is an active-site residue. A divalent metal cation is bound at residue N249.

This sequence belongs to the HMG-CoA lyase family. As to quaternary structure, homodimer. The cofactor is Mg(2+). Mn(2+) serves as cofactor.

The catalysed reaction is 3-hydroxy-3-(4-methylpent-3-en-1-yl)glutaryl-CoA = 7-methyl-3-oxooct-6-enoyl-CoA + acetate. The enzyme catalyses (3S)-3-hydroxy-3-methylglutaryl-CoA = acetoacetate + acetyl-CoA. It functions in the pathway metabolic intermediate metabolism; (S)-3-hydroxy-3-methylglutaryl-CoA degradation; acetoacetate from (S)-3-hydroxy-3-methylglutaryl-CoA: step 1/1. Involved in the L-leucine, isovalerate and acyclic monoterpene catabolism. Catalyzes the cleavage of 3-hydroxy-3-methylglutaryl-CoA (HMG-CoA) to yield acetyl-CoA and acetoacetate. It can also catalyze the cleavage of 3-hydroxy-3-isohexenylglutaryl-CoA (HIHG_CoA) to yield 7-methyl-3-oxooct-6-enoyl-CoA and acetate. The sequence is that of 3-hydroxy-3-isohexenylglutaryl-CoA/hydroxy-methylglutaryl-CoA lyase from Pseudomonas aeruginosa (strain ATCC 15692 / DSM 22644 / CIP 104116 / JCM 14847 / LMG 12228 / 1C / PRS 101 / PAO1).